Here is a 269-residue protein sequence, read N- to C-terminus: Shikimate dehydrogenase (NADP(+)) (269 aa).

Residues 17–19 (SKS) and threonine 64 contribute to the shikimate site. Residue lysine 68 is the Proton acceptor of the active site. Residue glutamate 80 coordinates NADP(+). The shikimate site is built by asparagine 89 and aspartate 105. Residues 130–134 (GAGGA), 154–159 (NRTHAK), and methionine 213 contribute to the NADP(+) site. Residue tyrosine 215 participates in shikimate binding. Glycine 237 provides a ligand contact to NADP(+).

It belongs to the shikimate dehydrogenase family. Homodimer.

It carries out the reaction shikimate + NADP(+) = 3-dehydroshikimate + NADPH + H(+). Its pathway is metabolic intermediate biosynthesis; chorismate biosynthesis; chorismate from D-erythrose 4-phosphate and phosphoenolpyruvate: step 4/7. Functionally, involved in the biosynthesis of the chorismate, which leads to the biosynthesis of aromatic amino acids. Catalyzes the reversible NADPH linked reduction of 3-dehydroshikimate (DHSA) to yield shikimate (SA). In Neisseria cinerea, this protein is Shikimate dehydrogenase (NADP(+)).